A 120-amino-acid polypeptide reads, in one-letter code: Protein GP96 (120 aa).

This sequence belongs to the herpesviridae UL96 family.

This Cavia porcellus (Guinea pig) protein is Protein GP96.